Consider the following 388-residue polypeptide: Tetratricopeptide repeat protein 4 (388 aa).

The residue at position 1 (Met1) is an N-acetylmethionine. Ser51 is subject to Phosphoserine. TPR repeat units lie at residues 79–112 (ARTY…KCAD), 117–150 (AVLY…KPCH), and 151–184 (LKAI…DATE). Ser244 is modified (phosphoserine).

It belongs to the TTC4 family. Interacts (via TPR repeats) with HSP90AB1. Interacts with HSPA8, CDC6, TBK1 and MSL1.

It localises to the nucleus. Its subcellular location is the nucleoplasm. The protein localises to the cytoplasm. May act as a co-chaperone for HSP90AB1. This Bos taurus (Bovine) protein is Tetratricopeptide repeat protein 4 (TTC4).